Reading from the N-terminus, the 160-residue chain is MLRQLKLTLNISRWIFMPWQRQASASSSQVPPFLAPISDDVIVDYEDPDYLPLPEYPVRPNEPLETRKQRLLYQSRKRGMLENDLLLSTFAAKYLKDFSAEQTAIYDQLINGVSNDWDIYYWATEVKPTPEEYNTEIMKLLKEHVKNAERVTRFRQPDLT.

The N-terminal 30 residues, 1–30 (MLRQLKLTLNISRWIFMPWQRQASASSSQV), are a transit peptide targeting the mitochondrion.

Belongs to the SDHAF2 family. As to quaternary structure, interacts with the flavoprotein subunit within the SDH catalytic dimer.

It is found in the mitochondrion matrix. Plays an essential role in the assembly of succinate dehydrogenase (SDH), an enzyme complex (also referred to as respiratory complex II) that is a component of both the tricarboxylic acid (TCA) cycle and the mitochondrial electron transport chain, and which couples the oxidation of succinate to fumarate with the reduction of ubiquinone (coenzyme Q) to ubiquinol. Required for flavinylation (covalent attachment of FAD) of the flavoprotein subunit of the SDH catalytic dimer. This Drosophila persimilis (Fruit fly) protein is Succinate dehydrogenase assembly factor 2-A, mitochondrial.